The sequence spans 482 residues: Zinc finger protein 385B (482 aa).

Residues 1–105 (MNMATFLRGF…TGSACHTTTL (105 aa)) are required for induction of apoptosis. 2 consecutive Matrin-type zinc fingers follow at residues 34-64 (SFCE…RVKQ) and 169-199 (ISCN…KVKA). Disordered regions lie at residues 54–75 (DGKS…PPVQ), 189–259 (KGSK…SFLL), and 268–287 (LGAI…SVAE). The segment at 106 to 482 (PALVRTPTLM…TPASILFAPY (377 aa)) is interaction with p53/TP53. Positions 231 to 240 (SSDKSEDKGK) are enriched in basic and acidic residues. Residues 294–328 (KKLLYCSLCKVAVNSLSQLEAHNTGSKHKTMVEAR) form a Matrin-type 3 zinc finger. Disordered stretches follow at residues 331-352 (AGPI…GSKG) and 378-397 (HISS…KPKY). Residues 360 to 390 (FHCEICDVHVNSEIQLKQHISSRRHKDRVAG) form a Matrin-type 4 zinc finger.

In terms of assembly, interacts with p53/TP53; the interaction is direct.

It localises to the nucleus. In terms of biological role, may play a role in p53/TP53-mediated apoptosis. The protein is Zinc finger protein 385B (Znf385b) of Mus musculus (Mouse).